We begin with the raw amino-acid sequence, 217 residues long: Transcriptional regulatory protein CutR (217 aa).

The Response regulatory domain occupies 2-116; the sequence is RVLVVEDEQL…ELIARVRALG (115 aa). Asp-51 carries the 4-aspartylphosphate modification. A DNA-binding region (ompR/PhoB-type) is located at residues 124–217; the sequence is PPVLERAGIK…VTVPGSGYRI (94 aa).

Member of the two-component regulatory system CutS/CutR, involved in the regulation of copper metabolism. CutR suppresses a defective melC1 gene, encoding a putative copper-transfer gene, probably by altering copper metabolism. This Streptomyces lividans protein is Transcriptional regulatory protein CutR (cutR).